A 243-amino-acid chain; its full sequence is UPF0246 protein spyM18_2163 (243 aa).

It belongs to the UPF0246 family.

The sequence is that of UPF0246 protein spyM18_2163 from Streptococcus pyogenes serotype M18 (strain MGAS8232).